Here is a 378-residue protein sequence, read N- to C-terminus: Small RNA 2'-O-methyltransferase (378 aa).

Position 61 (D61) interacts with S-adenosyl-L-methionine. 4 residues coordinate Mg(2+): E114, E117, H118, and H176.

The protein belongs to the methyltransferase superfamily. HEN1 family. It depends on Mg(2+) as a cofactor.

It is found in the cytoplasm. The catalysed reaction is small RNA 3'-end nucleotide + S-adenosyl-L-methionine = small RNA 3'-end 2'-O-methylnucleotide + S-adenosyl-L-homocysteine + H(+). Its function is as follows. Methyltransferase that adds a 2'-O-methyl group at the 3'-end of small RNAs. This is Small RNA 2'-O-methyltransferase from Schizosaccharomyces pombe (strain 972 / ATCC 24843) (Fission yeast).